Consider the following 245-residue polypeptide: NAD-dependent protein deacetylase (245 aa).

The Deacetylase sirtuin-type domain occupies 1-245 (MIFVQQFEEV…EFVEGLSSRK (245 aa)). NAD(+) is bound by residues Ala-26, Thr-30, Phe-37, Arg-38, Gln-105, Ile-107, Asp-108, and His-123. Phe-37 is a binding site for nicotinamide. Nicotinamide contacts are provided by Ile-107 and Asp-108. His-123 functions as the Proton acceptor in the catalytic mechanism. Cys-131, Cys-134, Cys-151, and Cys-154 together coordinate Zn(2+). NAD(+) is bound by residues Thr-190, Ser-191, Asn-216, and Ile-234.

Belongs to the sirtuin family. Class U subfamily. Zn(2+) serves as cofactor.

The protein localises to the cytoplasm. The enzyme catalyses N(6)-acetyl-L-lysyl-[protein] + NAD(+) + H2O = 2''-O-acetyl-ADP-D-ribose + nicotinamide + L-lysyl-[protein]. Functionally, NAD-dependent protein deacetylase which modulates the activities of several enzymes which are inactive in their acetylated form. This is NAD-dependent protein deacetylase from Bacillus cereus (strain ZK / E33L).